A 548-amino-acid polypeptide reads, in one-letter code: Acetolactate synthase isozyme 2 large subunit (548 aa).

Glu-47 is a binding site for thiamine diphosphate. Residues Arg-149, His-251–Arg-272, and Asp-294–Asp-313 each bind FAD. The tract at residues Gln-377–Arg-457 is thiamine pyrophosphate binding. Asp-428 and Asn-455 together coordinate Mg(2+).

It belongs to the TPP enzyme family. Tetramer of two large (IlvG) and two small (IlvM) chains. FAD serves as cofactor. The cofactor is Mg(2+). Requires thiamine diphosphate as cofactor.

It catalyses the reaction 2 pyruvate + H(+) = (2S)-2-acetolactate + CO2. It functions in the pathway amino-acid biosynthesis; L-isoleucine biosynthesis; L-isoleucine from 2-oxobutanoate: step 1/4. The protein operates within amino-acid biosynthesis; L-valine biosynthesis; L-valine from pyruvate: step 1/4. Its activity is regulated as follows. Inhibited by the herbicides chlorimuron ethyl, chlorsulfuron and imazapyr. Its function is as follows. Catalyzes the first step in the biosynthesis of branched-chain amino acids. The polypeptide is Acetolactate synthase isozyme 2 large subunit (ilvG) (Escherichia coli (strain K12)).